Here is a 955-residue protein sequence, read N- to C-terminus: Villin-5 (955 aa).

Gelsolin-like repeat units lie at residues 29–111, 152–218, 274–339, and 644–712; these read FKPV…DKFL, VHVK…VEDG, LLHE…TVMF, and HFTQ…GSEP. Disordered regions lie at residues 741-783 and 801-895; these read KGGG…RVRV and NSRN…GLPV. The segment covering 756 to 776 has biased composition (polar residues); that stretch reads PTYSGRSTVQDKSQRSRSMSF. Positions 817 to 836 are enriched in low complexity; sequence PKSATPDSSSAPSKSSATAS. The span at 842–864 shows a compositional bias: basic and acidic residues; sequence DRPKSVKDGSELEKPKQEEDAKE. A compositionally biased stretch (polar residues) spans 867–878; it reads NTMTSRVESLTI. Residues 890 to 955 form the HP domain; sequence DEGLPVYPYD…NRMKIALQLF (66 aa).

This sequence belongs to the villin/gelsolin family.

It localises to the cytoplasm. The protein localises to the cytoskeleton. Its function is as follows. Ca(2+)-regulated actin-binding protein. Binds actin microfilaments (MFs). Involved in actin filament bundling, severing and capping. Caps the barbed end of actin filaments and is able to sever them in a calcium-dependent manner. The protein is Villin-5 of Oryza sativa subsp. japonica (Rice).